A 376-amino-acid chain; its full sequence is Chlorophyll synthase, chloroplastic (376 aa).

A chloroplast-targeting transit peptide spans 1–47; sequence MATSHLLAAASSTAASSATFRPPLLSLRSPPPSSLRLNRRRHFQVVR. The tract at residues 48-69 is disordered; the sequence is AAETDKETKANAPEKAPAGGSS. Transmembrane regions (helical) follow at residues 95–115, 171–191, 197–217, 230–250, 255–275, 300–320, 325–345, and 355–375; these read PVTW…SGNF, VITQ…LLDV, FPII…YSAP, FALG…LFGT, IVVL…VNDF, WICV…LFSS, YALA…QYFL, and YQAS…LATS.

The protein belongs to the UbiA prenyltransferase family. Chlorophyll synthase subfamily.

It localises to the plastid. It is found in the chloroplast membrane. It carries out the reaction phytyl diphosphate + chlorophyllide a + H(+) = chlorophyll a + diphosphate. Functionally, involved in one of the last steps of the biosynthesis of chlorophyll a. The polypeptide is Chlorophyll synthase, chloroplastic (CHLG) (Oryza sativa subsp. japonica (Rice)).